The following is a 287-amino-acid chain: Protease HtpX (287 aa).

The next 2 membrane-spanning stretches (helical) occupy residues 4 to 24 (IFLL…VMSI) and 33 to 53 (GGLL…SLAI). H139 contributes to the Zn(2+) binding site. Residue E140 is part of the active site. Zn(2+) is bound at residue H143. Helical transmembrane passes span 154 to 174 (LIQG…ASII) and 195 to 215 (AVVF…VAYF). Residue E220 coordinates Zn(2+).

Belongs to the peptidase M48B family. Zn(2+) serves as cofactor.

Its subcellular location is the cell inner membrane. The protein is Protease HtpX of Shewanella loihica (strain ATCC BAA-1088 / PV-4).